An 82-amino-acid polypeptide reads, in one-letter code: Small ribosomal subunit protein eS27A (82 aa).

A C4-type zinc finger spans residues 37 to 59 (CPGCLNITTVFSHAQTAVTCESC). The residue at position 40 (Cys40) is an S-methylcysteine.

Belongs to the eukaryotic ribosomal protein eS27 family. As to quaternary structure, component of the small ribosomal subunit (SSU). Mature yeast ribosomes consist of a small (40S) and a large (60S) subunit. The 40S small subunit contains 1 molecule of ribosomal RNA (18S rRNA) and 33 different proteins (encoded by 57 genes). The large 60S subunit contains 3 rRNA molecules (25S, 5.8S and 5S rRNA) and 46 different proteins (encoded by 81 genes). It depends on Zn(2+) as a cofactor. Post-translationally, the N-terminus is not modified.

The protein localises to the cytoplasm. Functionally, component of the ribosome, a large ribonucleoprotein complex responsible for the synthesis of proteins in the cell. The small ribosomal subunit (SSU) binds messenger RNAs (mRNAs) and translates the encoded message by selecting cognate aminoacyl-transfer RNA (tRNA) molecules. The large subunit (LSU) contains the ribosomal catalytic site termed the peptidyl transferase center (PTC), which catalyzes the formation of peptide bonds, thereby polymerizing the amino acids delivered by tRNAs into a polypeptide chain. The nascent polypeptides leave the ribosome through a tunnel in the LSU and interact with protein factors that function in enzymatic processing, targeting, and the membrane insertion of nascent chains at the exit of the ribosomal tunnel. The polypeptide is Small ribosomal subunit protein eS27A (Saccharomyces cerevisiae (strain ATCC 204508 / S288c) (Baker's yeast)).